Consider the following 211-residue polypeptide: Dual specificity phosphatase 29 (211 aa).

The region spanning 47–192 is the Tyrosine-protein phosphatase domain; sequence HVNEVWPGIY…LRTLDIQLAI (146 aa). A substrate-binding site is contributed by 136–143; the sequence is HCAMGRSR. The active-site Phosphocysteine intermediate is C137.

The protein belongs to the protein-tyrosine phosphatase family. Non-receptor class dual specificity subfamily.

The protein localises to the cytoplasm. The protein resides in the nucleus. The enzyme catalyses O-phospho-L-tyrosyl-[protein] + H2O = L-tyrosyl-[protein] + phosphate. It carries out the reaction O-phospho-L-seryl-[protein] + H2O = L-seryl-[protein] + phosphate. The catalysed reaction is O-phospho-L-threonyl-[protein] + H2O = L-threonyl-[protein] + phosphate. Functionally, dual specificity phosphatase able to dephosphorylate phosphotyrosine, phosphoserine and phosphothreonine residues within the same substrate, with a preference for phosphotyrosine as a substrate. Involved in the modulation of AMPK and MAPK1/2 signaling pathways. This is Dual specificity phosphatase 29 (dusp29) from Callorhinchus milii (Ghost shark).